The following is a 392-amino-acid chain: ATP phosphoribosyltransferase regulatory subunit (392 aa).

This sequence belongs to the class-II aminoacyl-tRNA synthetase family. HisZ subfamily. In terms of assembly, heteromultimer composed of HisG and HisZ subunits.

It is found in the cytoplasm. Its pathway is amino-acid biosynthesis; L-histidine biosynthesis; L-histidine from 5-phospho-alpha-D-ribose 1-diphosphate: step 1/9. Required for the first step of histidine biosynthesis. May allow the feedback regulation of ATP phosphoribosyltransferase activity by histidine. The chain is ATP phosphoribosyltransferase regulatory subunit from Prochlorococcus marinus (strain MIT 9313).